A 267-amino-acid chain; its full sequence is Small ribosomal subunit protein uS3 (267 aa).

One can recognise a KH type-2 domain in the interval 43-111 (IRKEMSKDLE…QVQLNIFEVK (69 aa)). The disordered stretch occupies residues 216–267 (FEEQQAQQNNRPGRRGGDRRPRRGNRSAAPQAAEAPKAEAPAEAAPAAETKE). The segment covering 241–267 (RSAAPQAAEAPKAEAPAEAAPAAETKE) has biased composition (low complexity).

It belongs to the universal ribosomal protein uS3 family. As to quaternary structure, part of the 30S ribosomal subunit. Forms a tight complex with proteins S10 and S14.

In terms of biological role, binds the lower part of the 30S subunit head. Binds mRNA in the 70S ribosome, positioning it for translation. This Bifidobacterium longum subsp. infantis (strain ATCC 15697 / DSM 20088 / JCM 1222 / NCTC 11817 / S12) protein is Small ribosomal subunit protein uS3.